A 235-amino-acid polypeptide reads, in one-letter code: MMKKGLLAGALTATVLFGTCAVDVPGIISPKTAEAASQLTDGIGGRAYLNSNGAILVTKIQLPSSTQVSNGTAYIYSGFSGGTESDIGFQYSDKYNVWKPYMKVGSKGQDQVQYLEGGSQFTNTKGFRPGSTVQLTIYKNLNGNTRATYWGTNNAGYNGRLISEISKTNVGSISKWKALATVATTGSRQSIKSNFSTSFTNITIDNKAITPVIDTQDFAKVTVSGNSVSLSVVKN.

It to B.subtilis YncM.

This is an uncharacterized protein from Bacillus subtilis (strain 168).